We begin with the raw amino-acid sequence, 119 residues long: Large ribosomal subunit protein bL20 (119 aa).

The protein belongs to the bacterial ribosomal protein bL20 family.

Functionally, binds directly to 23S ribosomal RNA and is necessary for the in vitro assembly process of the 50S ribosomal subunit. It is not involved in the protein synthesizing functions of that subunit. This chain is Large ribosomal subunit protein bL20, found in Acinetobacter baumannii (strain SDF).